We begin with the raw amino-acid sequence, 1172 residues long: Laminin subunit beta-3 (1172 aa).

A signal peptide spans 1 to 17 (MRPFFLLCFALPGLLHA). The region spanning 22 to 249 (SRGACYPPVG…AVSQLRLQGS (228 aa)) is the Laminin N-terminal domain. Residue asparagine 220 is glycosylated (N-linked (GlcNAc...) asparagine). Cystine bridges form between cysteine 250-cysteine 259, cysteine 252-cysteine 279, cysteine 281-cysteine 290, cysteine 293-cysteine 313, cysteine 316-cysteine 325, cysteine 318-cysteine 343, cysteine 346-cysteine 355, cysteine 358-cysteine 376, cysteine 379-cysteine 392, cysteine 381-cysteine 399, cysteine 401-cysteine 410, cysteine 413-cysteine 428, cysteine 431-cysteine 444, cysteine 433-cysteine 451, cysteine 453-cysteine 462, cysteine 465-cysteine 478, cysteine 481-cysteine 493, cysteine 483-cysteine 500, cysteine 502-cysteine 511, cysteine 519-cysteine 531, cysteine 534-cysteine 546, cysteine 536-cysteine 553, cysteine 555-cysteine 564, and cysteine 567-cysteine 578. Laminin EGF-like domains follow at residues 250 to 315 (CFCH…ECQR), 316 to 378 (CDCN…TCIS), 379 to 430 (CECD…GCHR), 431 to 480 (CDCN…GCEP), 481 to 533 (CACD…GCRA), and 534 to 580 (CDCD…VCVA). Residues 579–785 (VACHPCFQTY…SLPDLTPTFN (207 aa)) form a domain II region. Residue asparagine 604 is glycosylated (N-linked (GlcNAc...) asparagine). Positions 723 to 757 (EQSAQAAQQVSDSSRLLDQLRDSRREAERLVRQAG) form a coiled coil. Residues 786–816 (KLCGNSRQMACTPISCPGELCPQDNGTACGS) form a domain alpha region. Asparagine 810 carries an N-linked (GlcNAc...) asparagine glycan. A domain I region spans residues 817–1170 (RCRGVLPRAG…INGRVLYYAT (354 aa)). Coiled-coil stretches lie at residues 831-884 (MAGQ…MEED) and 948-1133 (VLSQ…ELEL).

In terms of assembly, laminin is a complex glycoprotein, consisting of three different polypeptide chains (alpha, beta, gamma), which are bound to each other by disulfide bonds into a cross-shaped molecule comprising one long and three short arms with globules at each end. Beta-3 is a subunit of laminin-5 (laminin-332 or epiligrin/kalinin/nicein). Interacts with ECM1. In terms of tissue distribution, found in the basement membranes (major component).

The protein resides in the secreted. The protein localises to the extracellular space. It localises to the extracellular matrix. Its subcellular location is the basement membrane. Its function is as follows. Binding to cells via a high affinity receptor, laminin is thought to mediate the attachment, migration and organization of cells into tissues during embryonic development by interacting with other extracellular matrix components. The sequence is that of Laminin subunit beta-3 (LAMB3) from Homo sapiens (Human).